The primary structure comprises 43 residues: Protein PsbN (43 aa).

Residues 7-29 (IVIFVSSLLLGITTYSVYTAFGP) traverse the membrane as a helical segment.

The protein belongs to the PsbN family.

Its subcellular location is the plastid. The protein resides in the chloroplast thylakoid membrane. May play a role in photosystem I and II biogenesis. The protein is Protein PsbN of Phaeodactylum tricornutum (strain CCAP 1055/1).